A 142-amino-acid chain; its full sequence is Hemoglobin A subunit alpha-2 (142 aa).

One can recognise a Globin domain in the interval 2–142 (VLTAGDKANV…VAQNLTSKYR (141 aa)). H59 is a binding site for O2. H88 contributes to the heme b binding site.

This sequence belongs to the globin family. As to quaternary structure, tetramer of alpha-1, alpha-2 and two identical beta chains. Red blood cells.

In terms of biological role, involved in oxygen transport from the lung to the various peripheral tissues. This is Hemoglobin A subunit alpha-2 from Aldabrachelys gigantea (Aldabra giant tortoise).